The sequence spans 347 residues: Holliday junction branch migration complex subunit RuvB (347 aa).

The tract at residues 4-186 (INEYGSERIV…FGMIFEMNFY (183 aa)) is large ATPase domain (RuvB-L). ATP-binding positions include Leu25, Arg26, Gly67, Lys70, Thr71, Thr72, 133–135 (EDF), Arg176, Tyr186, and Arg223. Residue Thr71 participates in Mg(2+) binding. The interval 187-257 (TQEELKMIIT…IVEEVMRLLG (71 aa)) is small ATPAse domain (RuvB-S). The segment at 260-347 (EFGLDEMDRK…GLFDGFGNIE (88 aa)) is head domain (RuvB-H). Arg315 and Arg320 together coordinate DNA.

It belongs to the RuvB family. Homohexamer. Forms an RuvA(8)-RuvB(12)-Holliday junction (HJ) complex. HJ DNA is sandwiched between 2 RuvA tetramers; dsDNA enters through RuvA and exits via RuvB. An RuvB hexamer assembles on each DNA strand where it exits the tetramer. Each RuvB hexamer is contacted by two RuvA subunits (via domain III) on 2 adjacent RuvB subunits; this complex drives branch migration. In the full resolvosome a probable DNA-RuvA(4)-RuvB(12)-RuvC(2) complex forms which resolves the HJ.

Its subcellular location is the cytoplasm. It catalyses the reaction ATP + H2O = ADP + phosphate + H(+). The RuvA-RuvB-RuvC complex processes Holliday junction (HJ) DNA during genetic recombination and DNA repair, while the RuvA-RuvB complex plays an important role in the rescue of blocked DNA replication forks via replication fork reversal (RFR). RuvA specifically binds to HJ cruciform DNA, conferring on it an open structure. The RuvB hexamer acts as an ATP-dependent pump, pulling dsDNA into and through the RuvAB complex. RuvB forms 2 homohexamers on either side of HJ DNA bound by 1 or 2 RuvA tetramers; 4 subunits per hexamer contact DNA at a time. Coordinated motions by a converter formed by DNA-disengaged RuvB subunits stimulates ATP hydrolysis and nucleotide exchange. Immobilization of the converter enables RuvB to convert the ATP-contained energy into a lever motion, pulling 2 nucleotides of DNA out of the RuvA tetramer per ATP hydrolyzed, thus driving DNA branch migration. The RuvB motors rotate together with the DNA substrate, which together with the progressing nucleotide cycle form the mechanistic basis for DNA recombination by continuous HJ branch migration. Branch migration allows RuvC to scan DNA until it finds its consensus sequence, where it cleaves and resolves cruciform DNA. This Fervidobacterium nodosum (strain ATCC 35602 / DSM 5306 / Rt17-B1) protein is Holliday junction branch migration complex subunit RuvB.